We begin with the raw amino-acid sequence, 214 residues long: Pyrrolidone-carboxylate peptidase (214 aa).

Active-site residues include Glu78, Cys141, and His165.

This sequence belongs to the peptidase C15 family. In terms of assembly, homotetramer.

The protein localises to the cytoplasm. It carries out the reaction Release of an N-terminal pyroglutamyl group from a polypeptide, the second amino acid generally not being Pro.. Functionally, removes 5-oxoproline from various penultimate amino acid residues except L-proline. This is Pyrrolidone-carboxylate peptidase from Streptococcus pneumoniae (strain 70585).